Consider the following 103-residue polypeptide: G0/G1 switch protein 2 (103 aa).

In terms of assembly, directly interacts with BCL2; this interaction prevents the formation of the anti-apoptotic BAX-BCL2 complex.

The protein resides in the mitochondrion. Its function is as follows. Promotes apoptosis by binding to BCL2, hence preventing the formation of protective BCL2-BAX heterodimers. This Rattus norvegicus (Rat) protein is G0/G1 switch protein 2 (G0s2).